The sequence spans 183 residues: Large ribosomal subunit protein uL5 (183 aa).

It belongs to the universal ribosomal protein uL5 family. In terms of assembly, part of the 50S ribosomal subunit; part of the 5S rRNA/L5/L18/L25 subcomplex. Contacts the 5S rRNA and the P site tRNA. Forms a bridge to the 30S subunit in the 70S ribosome.

Its function is as follows. This is one of the proteins that bind and probably mediate the attachment of the 5S RNA into the large ribosomal subunit, where it forms part of the central protuberance. In the 70S ribosome it contacts protein S13 of the 30S subunit (bridge B1b), connecting the 2 subunits; this bridge is implicated in subunit movement. Contacts the P site tRNA; the 5S rRNA and some of its associated proteins might help stabilize positioning of ribosome-bound tRNAs. In Tropheryma whipplei (strain TW08/27) (Whipple's bacillus), this protein is Large ribosomal subunit protein uL5.